Reading from the N-terminus, the 490-residue chain is UDP-N-acetylmuramate--L-alanine ligase (490 aa).

122 to 128 is a binding site for ATP; the sequence is GTHGKTS.

Belongs to the MurCDEF family.

It is found in the cytoplasm. The enzyme catalyses UDP-N-acetyl-alpha-D-muramate + L-alanine + ATP = UDP-N-acetyl-alpha-D-muramoyl-L-alanine + ADP + phosphate + H(+). It functions in the pathway cell wall biogenesis; peptidoglycan biosynthesis. Functionally, cell wall formation. The chain is UDP-N-acetylmuramate--L-alanine ligase from Mycobacteroides abscessus (strain ATCC 19977 / DSM 44196 / CCUG 20993 / CIP 104536 / JCM 13569 / NCTC 13031 / TMC 1543 / L948) (Mycobacterium abscessus).